A 202-amino-acid polypeptide reads, in one-letter code: Guanylate kinase (202 aa).

The 179-residue stretch at 3 to 181 folds into the Guanylate kinase-like domain; it reads GNLFIITAPS…ALEDLRAIIR (179 aa). 10–17 is a binding site for ATP; sequence APSGAGKT.

This sequence belongs to the guanylate kinase family.

It localises to the cytoplasm. It carries out the reaction GMP + ATP = GDP + ADP. Its function is as follows. Essential for recycling GMP and indirectly, cGMP. This is Guanylate kinase from Methylobacillus flagellatus (strain ATCC 51484 / DSM 6875 / VKM B-1610 / KT).